Reading from the N-terminus, the 403-residue chain is Phosphoglycerate kinase (403 aa).

Residues 21 to 23 (DFN), Arg-36, 59 to 62 (HLGR), Arg-119, and Arg-159 contribute to the substrate site. ATP-binding positions include Lys-214, Gly-301, Glu-332, and 359-362 (GGDS).

It belongs to the phosphoglycerate kinase family. As to quaternary structure, monomer.

It is found in the cytoplasm. It catalyses the reaction (2R)-3-phosphoglycerate + ATP = (2R)-3-phospho-glyceroyl phosphate + ADP. It participates in carbohydrate degradation; glycolysis; pyruvate from D-glyceraldehyde 3-phosphate: step 2/5. This is Phosphoglycerate kinase from Lactobacillus delbrueckii subsp. lactis.